Reading from the N-terminus, the 55-residue chain is Lantibiotic epilancin (55 aa).

A propeptide spans 1–24 (MNNSLFDLNLNKGVETQKSDLSPQ) (cleaved by ElxP). S25 is subject to D-lactate; by the dehydratase ElxB and the dehydrogenase ElxO. S27 is modified (2,3-didehydroalanine (Ser); by the dehydratase ElxB). T31 is modified (2,3-didehydrobutyrine; by the dehydratase ElxB). S32 is modified (2,3-didehydroalanine (Ser); by the dehydratase ElxB). The segment at residues 36–40 (SKKYC) is a cross-link (lanthionine (Ser-Cys); by the dehydratase ElxB and the cyclase ElxC). 2 cross-links (beta-methyllanthionine (Thr-Cys); by the dehydratase ElxB and the cyclase ElxC) span residues 44-47 (TLTC) and 46-49 (TCGC). T52 carries the post-translational modification 2,3-didehydrobutyrine; by the dehydratase ElxB.

It belongs to the type A lantibiotic family. In terms of processing, maturation of this lantibiotic involves the enzymatic conversion of Thr, and Ser into dehydrated AA by ElxB and the formation of thioether bonds with cysteine by the cyclase ElxC. The next steps are cleavage of the leader peptide by ElxP and membrane translocation by ElxT. The leader peptide may be removed before membrane translocation, in contrast to other lantibiotics for which the cleavage occur after translocation. This is suggested by the probable cytoplasmic localization of the serine protease ElxP that cleaves the leader peptide. It is not established whether the 2,3-didehydrobutyrine is the E- or Z-isomer. Post-translationally, the N-terminal D-lactate is probably produced by dehydration of Ser-25 by ElxB, followed by proteolytic removal of the leader peptide by the serine protease ElxP and hydrolysis of the resulting new N-terminal dehydroalanine. This hydrolysis may occur spontaneously. The pyruvate group thus formed is reduced to D-lactate by the NADPH-dependent oxidoreductase ElxO. This N-terminal D-lactate protects the lantibiotic against degradation against aminopeptidase.

Functionally, lanthionine-containing peptide antibiotic (lantibiotic) active on Gram-positive bacteria such as staphylococci, enterococci and streptococci. The bactericidal activity of lantibiotics is based on depolarization of energized bacterial cytoplasmic membranes, initiated by the formation of aqueous transmembrane pores. In Staphylococcus epidermidis, this protein is Lantibiotic epilancin (elkA).